The following is a 571-amino-acid chain: Urease subunit alpha (571 aa).

The Urease domain maps to 132 to 571 (GGIDAHIHFI…VALAQRYFLF (440 aa)). Ni(2+)-binding residues include histidine 137, histidine 139, and lysine 220. The residue at position 220 (lysine 220) is an N6-carboxylysine. Histidine 222 contributes to the substrate binding site. Positions 249 and 275 each coordinate Ni(2+). Histidine 323 acts as the Proton donor in catalysis. Ni(2+) is bound at residue aspartate 363.

Belongs to the metallo-dependent hydrolases superfamily. Urease alpha subunit family. In terms of assembly, heterotrimer of UreA (gamma), UreB (beta) and UreC (alpha) subunits. Three heterotrimers associate to form the active enzyme. The cofactor is Ni cation. Post-translationally, carboxylation allows a single lysine to coordinate two nickel ions.

It localises to the cytoplasm. It catalyses the reaction urea + 2 H2O + H(+) = hydrogencarbonate + 2 NH4(+). It participates in nitrogen metabolism; urea degradation; CO(2) and NH(3) from urea (urease route): step 1/1. This chain is Urease subunit alpha, found in Halalkalibacterium halodurans (strain ATCC BAA-125 / DSM 18197 / FERM 7344 / JCM 9153 / C-125) (Bacillus halodurans).